We begin with the raw amino-acid sequence, 419 residues long: tRNA modification GTPase MnmE (419 aa).

(6S)-5-formyl-5,6,7,8-tetrahydrofolate contacts are provided by R2, E59, and R99. A TrmE-type G domain is found at 197–343 (GLSVVIAGPP…LHTMIVEMAR (147 aa)). N207 contributes to the K(+) binding site. GTP contacts are provided by residues 207–212 (NAGKST), 226–232 (SPVAGTT), and 251–254 (DTAG). S211 provides a ligand contact to Mg(2+). Positions 226, 228, and 231 each coordinate K(+). T232 contributes to the Mg(2+) binding site. K419 lines the (6S)-5-formyl-5,6,7,8-tetrahydrofolate pocket.

It belongs to the TRAFAC class TrmE-Era-EngA-EngB-Septin-like GTPase superfamily. TrmE GTPase family. In terms of assembly, homodimer. Heterotetramer of two MnmE and two MnmG subunits. The cofactor is K(+).

The protein resides in the cytoplasm. Functionally, exhibits a very high intrinsic GTPase hydrolysis rate. Involved in the addition of a carboxymethylaminomethyl (cmnm) group at the wobble position (U34) of certain tRNAs, forming tRNA-cmnm(5)s(2)U34. This chain is tRNA modification GTPase MnmE, found in Sphingopyxis alaskensis (strain DSM 13593 / LMG 18877 / RB2256) (Sphingomonas alaskensis).